A 211-amino-acid chain; its full sequence is MRKYIKIGVAGPVGAGKTALIERLTREIASKYSVAVITNDIYTQEDAEFLTKNSLLPPERIMGVETGGCPHTAIREDASMNLEAVDEMVARFPEVELIFIESGGDNLSATFSPDLADVTIFVIDVAQGEKIPRKGGPGITRSDLLVINKTDLAPFVGADLSVMKRDARRMRNGQPFIFTNLMKNENLDGVIGWIEKYALLKNIEDPASLVR.

11 to 18 provides a ligand contact to GTP; it reads GPVGAGKT.

Belongs to the SIMIBI class G3E GTPase family. UreG subfamily. As to quaternary structure, homodimer. UreD, UreF and UreG form a complex that acts as a GTP-hydrolysis-dependent molecular chaperone, activating the urease apoprotein by helping to assemble the nickel containing metallocenter of UreC. The UreE protein probably delivers the nickel.

It localises to the cytoplasm. Facilitates the functional incorporation of the urease nickel metallocenter. This process requires GTP hydrolysis, probably effectuated by UreG. This Actinobacillus pleuropneumoniae serotype 7 (strain AP76) protein is Urease accessory protein UreG.